The sequence spans 250 residues: uncharacterized protein (250 aa).

The first 25 residues, 1–25 (MKTLRTLCVLMILSGVIFFGLKIDA), serve as a signal peptide directing secretion.

This is an uncharacterized protein from Bacillus subtilis (strain 168).